A 218-amino-acid chain; its full sequence is Ribose-5-phosphate isomerase A (218 aa).

Substrate contacts are provided by residues 28–31 (TGST), 81–84 (DGAD), and 94–97 (KGGG). The Proton acceptor role is filled by glutamate 103. Lysine 121 contributes to the substrate binding site.

This sequence belongs to the ribose 5-phosphate isomerase family. Homodimer.

The catalysed reaction is aldehydo-D-ribose 5-phosphate = D-ribulose 5-phosphate. Its pathway is carbohydrate degradation; pentose phosphate pathway; D-ribose 5-phosphate from D-ribulose 5-phosphate (non-oxidative stage): step 1/1. Functionally, catalyzes the reversible conversion of ribose-5-phosphate to ribulose 5-phosphate. This Shewanella woodyi (strain ATCC 51908 / MS32) protein is Ribose-5-phosphate isomerase A.